The sequence spans 485 residues: Glutamate--tRNA ligase 1 (485 aa).

The 'HIGH' region motif lies at 10-20 (PSPTGAIHIGN). The short motif at 252-256 (KLSKR) is the 'KMSKS' region element. An ATP-binding site is contributed by Lys255.

This sequence belongs to the class-I aminoacyl-tRNA synthetase family. Glutamate--tRNA ligase type 1 subfamily. Monomer.

It localises to the cytoplasm. The enzyme catalyses tRNA(Glu) + L-glutamate + ATP = L-glutamyl-tRNA(Glu) + AMP + diphosphate. In terms of biological role, catalyzes the attachment of glutamate to tRNA(Glu) in a two-step reaction: glutamate is first activated by ATP to form Glu-AMP and then transferred to the acceptor end of tRNA(Glu). The protein is Glutamate--tRNA ligase 1 of Thermoanaerobacter pseudethanolicus (strain ATCC 33223 / 39E) (Clostridium thermohydrosulfuricum).